An 880-amino-acid polypeptide reads, in one-letter code: Probable LRR receptor-like serine/threonine-protein kinase At2g28960 (880 aa).

Residues 1–24 (MEGRRQRLLVFIFGALAITHLVQA) form the signal peptide. At 25 to 511 (QPPDQRGFIS…NNNNQTYIVP (487 aa)) the chain is on the extracellular side. N-linked (GlcNAc...) asparagine glycosylation is found at N180, N201, N228, N254, N287, N403, N430, and N441. LRR repeat units lie at residues 409–430 (RIIS…AFQN), 433–455 (ELRK…LASM), and 457–476 (SLSI…PKLL). An N-linked (GlcNAc...) asparagine glycan is attached at N505. Residues 512–532 (VVASVASVLIIIAVLILILVF) traverse the membrane as a helical segment. Topologically, residues 533–880 (KKRRPTQVDS…FTTEINPKAR (348 aa)) are cytoplasmic. At T564 the chain carries Phosphothreonine. The 274-residue stretch at 573-846 (DNFERVLGEG…QVTNELKQCL (274 aa)) folds into the Protein kinase domain. ATP contacts are provided by residues 579-587 (LGEGGFGVV) and K601. Y646 is subject to Phosphotyrosine. The active-site Proton acceptor is the D698. A Phosphoserine modification is found at S732. A phosphothreonine mark is found at T733 and T738. Phosphotyrosine is present on Y746. Positions 854–880 (GVREDMGSRSSVEMSTSFTTEINPKAR) are disordered. Over residues 861–880 (SRSSVEMSTSFTTEINPKAR) the composition is skewed to polar residues.

This sequence belongs to the protein kinase superfamily. Ser/Thr protein kinase family.

The protein localises to the membrane. It carries out the reaction L-seryl-[protein] + ATP = O-phospho-L-seryl-[protein] + ADP + H(+). The enzyme catalyses L-threonyl-[protein] + ATP = O-phospho-L-threonyl-[protein] + ADP + H(+). This chain is Probable LRR receptor-like serine/threonine-protein kinase At2g28960, found in Arabidopsis thaliana (Mouse-ear cress).